We begin with the raw amino-acid sequence, 207 residues long: Outer-membrane lipoprotein LolB (207 aa).

The signal sequence occupies residues 1–21 (MTLPDFRLIRLLPLASLVLTA). The N-palmitoyl cysteine moiety is linked to residue Cys22. Cys22 carries the S-diacylglycerol cysteine lipid modification.

Belongs to the LolB family. Monomer.

It is found in the cell outer membrane. Functionally, plays a critical role in the incorporation of lipoproteins in the outer membrane after they are released by the LolA protein. The protein is Outer-membrane lipoprotein LolB of Salmonella agona (strain SL483).